The following is a 220-amino-acid chain: MMKCLFLLCLCLLPILVFSSTFTSQNPINLPSESPVPKPVLDTNGKELNPNSSYRIISIGRGALGGDVYLGKSPNSDAPCPDGVFRYNSDVGPSGTPVRFIPLSTNIFEDQLLNIQFNIPTVKLCVSYRNWKVGNLNAHLWTMLLETGGTIGQADSSYFKIVKSSKFGYNLLYCPITRHFLCPFCRDDNFCAKVGVDIQNGKRRLALVSENPLDVLFQEV.

The N-terminal stretch at 1-23 is a signal peptide; the sequence is MMKCLFLLCLCLLPILVFSSTFT. A propeptide spanning residues 24–32 is cleaved from the precursor; sequence SQNPINLPS. The Vacuolar targeting signal signature appears at 26-31; that stretch reads NPINLP. N-linked (GlcNAc...) asparagine glycosylation occurs at Asn-51. 2 cysteine pairs are disulfide-bonded: Cys-80–Cys-125 and Cys-174–Cys-185.

It belongs to the protease inhibitor I3 (leguminous Kunitz-type inhibitor) family. Tubers.

The protein localises to the vacuole. Its function is as follows. Inhibits tightly cathepsin D (aspartic protease) and weakly trypsin (serine protease). May protect the plant by inhibiting proteases of invading organisms. In Solanum tuberosum (Potato), this protein is Aspartic protease inhibitor 4.